Reading from the N-terminus, the 91-residue chain is Non-specific lipid-transfer protein 1 (91 aa).

4 disulfide bridges follow: C3–C50, C13–C27, C28–C73, and C48–C87.

This sequence belongs to the plant LTP family.

Functionally, plant non-specific lipid-transfer proteins transfer phospholipids as well as galactolipids across membranes. May play a role in wax or cutin deposition in the cell walls of expanding epidermal cells and certain secretory tissues. The protein is Non-specific lipid-transfer protein 1 of Morus nigra (Black mulberry).